A 218-amino-acid chain; its full sequence is Antifreeze protein Maxi (218 aa).

A signal peptide spans 1–23 (MALSLFTVGQFIFLFWTISITEA).

Belongs to the type-I AFP family. As to quaternary structure, homodimer. In terms of tissue distribution, detected in blood serum (at protein level). Detected in liver.

It is found in the secreted. Its function is as follows. Contributes to protect fish blood from freezing at subzero sea water temperatures. Lowers the blood freezing point by about 1.1 degrees at a concentration of 0.1 mg/ml, and by about 1.5 degrees at a concentration of 0.2 mg/ml. Binds to nascent ice crystals and prevents further growth. The polypeptide is Antifreeze protein Maxi (Pseudopleuronectes americanus (Winter flounder)).